Reading from the N-terminus, the 192-residue chain is Putative manganese efflux pump MntP (192 aa).

A run of 6 helical transmembrane segments spans residues 2–22 (IAII…AFAV), 41–61 (SALW…YAAS), 62–82 (AFSA…LAFI), 109–129 (MLPL…SLAF), 136–156 (FAIL…LYIG), and 172–192 (GVVL…VIAF).

This sequence belongs to the MntP (TC 9.B.29) family.

The protein localises to the cell membrane. In terms of biological role, probably functions as a manganese efflux pump. In Bifidobacterium longum subsp. infantis (strain ATCC 15697 / DSM 20088 / JCM 1222 / NCTC 11817 / S12), this protein is Putative manganese efflux pump MntP.